Consider the following 185-residue polypeptide: Elongation factor P (185 aa).

It belongs to the elongation factor P family.

Its subcellular location is the cytoplasm. The protein operates within protein biosynthesis; polypeptide chain elongation. Its function is as follows. Involved in peptide bond synthesis. Stimulates efficient translation and peptide-bond synthesis on native or reconstituted 70S ribosomes in vitro. Probably functions indirectly by altering the affinity of the ribosome for aminoacyl-tRNA, thus increasing their reactivity as acceptors for peptidyl transferase. The chain is Elongation factor P from Streptococcus pyogenes serotype M49 (strain NZ131).